Consider the following 856-residue polypeptide: Inactive rhomboid protein 1 (856 aa).

Residues methionine 1 to leucine 20 form a disordered region. The Cytoplasmic segment spans residues methionine 1–threonine 412. Residues serine 76 and serine 176 each carry the phosphoserine modification. Phosphothreonine occurs at positions 180 and 183. Serine 391 is subject to Phosphoserine. Residues phenylalanine 413–phenylalanine 433 traverse the membrane as a helical segment. Over serine 434–arginine 656 the chain is Lumenal. The N-linked (GlcNAc...) asparagine glycan is linked to asparagine 584. The chain crosses the membrane as a helical span at residues leucine 657–glutamine 677. At methionine 678–arginine 692 the chain is on the cytoplasmic side. A helical membrane pass occupies residues isoleucine 693–proline 713. Residues tyrosine 714–arginine 715 lie on the Lumenal side of the membrane. A helical transmembrane segment spans residues alanine 716–phenylalanine 736. Residues glutamine 737–arginine 747 are Cytoplasmic-facing. Residues alanine 748–isoleucine 768 form a helical membrane-spanning segment. At aspartate 769–histidine 773 the chain is on the lumenal side. Residues isoleucine 774–glycine 794 form a helical membrane-spanning segment. Topologically, residues lysine 795–glutamine 804 are cytoplasmic. The chain crosses the membrane as a helical span at residues isoleucine 805 to phenylalanine 825. Topologically, residues tyrosine 826–histidine 856 are lumenal.

This sequence belongs to the peptidase S54 family. In terms of assembly, homodimer, or homooligomer. Interacts with TGFA and HBEGF. Interacts with EGF; may retain EGF in the endoplasmic reticulum and regulates its degradation through the endoplasmic reticulum-associated degradation (ERAD). Interacts (via cytoplasmic N-terminus) with FRMD8/iTAP; this interaction leads to mutual protein stabilization. Interacts with ADAM17/TACE.

It localises to the endoplasmic reticulum membrane. The protein localises to the golgi apparatus membrane. Functionally, regulates ADAM17 protease, a sheddase of the epidermal growth factor (EGF) receptor ligands and TNF, thereby plays a role in sleep, cell survival, proliferation, migration and inflammation. Does not exhibit any protease activity on its own. The polypeptide is Inactive rhomboid protein 1 (Rhbdf1) (Rattus norvegicus (Rat)).